Here is a 274-residue protein sequence, read N- to C-terminus: Nitrogenase iron protein (274 aa).

Position 8–15 (8–15) interacts with ATP; sequence GKGGIGKS. Cysteine 94 contributes to the [4Fe-4S] cluster binding site. Arginine 97 is modified (ADP-ribosylarginine; by dinitrogenase reductase ADP-ribosyltransferase). A [4Fe-4S] cluster-binding site is contributed by cysteine 131.

Belongs to the NifH/BchL/ChlL family. Homodimer. [4Fe-4S] cluster is required as a cofactor. Post-translationally, the reversible ADP-ribosylation of Arg-97 inactivates the nitrogenase reductase and regulates nitrogenase activity.

The catalysed reaction is N2 + 8 reduced [2Fe-2S]-[ferredoxin] + 16 ATP + 16 H2O = H2 + 8 oxidized [2Fe-2S]-[ferredoxin] + 2 NH4(+) + 16 ADP + 16 phosphate + 6 H(+). Its function is as follows. The key enzymatic reactions in nitrogen fixation are catalyzed by the nitrogenase complex, which has 2 components: the iron protein and the molybdenum-iron protein. The protein is Nitrogenase iron protein of Chlorobium chlorochromatii (strain CaD3).